The primary structure comprises 382 residues: Beta-1,4-galactosyltransferase 6 (382 aa).

At 1 to 15 (MSALKRMMRVSNRSL) the chain is on the cytoplasmic side. The chain crosses the membrane as a helical; Signal-anchor for type II membrane protein span at residues 16-35 (IAFIFFFSLSTSCLYFIYVA). Residues 36 to 382 (PGIANTYLFM…MPELAPVEDY (347 aa)) lie on the Lumenal side of the membrane. N-linked (GlcNAc...) asparagine glycans are attached at residues Asn-71, Asn-75, Asn-83, Asn-84, Asn-99, and Asn-122. Cys-108 and Cys-152 are joined by a disulfide. UDP-alpha-D-galactose is bound by residues 163-167 (PFRNR), 202-204 (FNR), 229-230 (VD), Tyr-258, and Trp-290. Cys-223 and Cys-242 are oxidised to a cystine. Asp-230 contacts Mn(2+). 292-295 (GEDD) provides a ligand contact to N-acetyl-D-glucosamine. Residue Asn-307 is glycosylated (N-linked (GlcNAc...) asparagine). His-323 lines the Mn(2+) pocket. 323–324 (HH) contacts UDP-alpha-D-galactose. Arg-334 lines the N-acetyl-D-glucosamine pocket. The N-linked (GlcNAc...) asparagine glycan is linked to Asn-367.

It belongs to the glycosyltransferase 7 family. The cofactor is Mn(2+). Mg(2+) is required as a cofactor. It depends on Ca(2+) as a cofactor. Highest expression in brain with lower levels found in lungs, heart, skeletal muscle and kidney. Lowest expression in testis, liver and spleen.

Its subcellular location is the golgi apparatus. The protein localises to the golgi stack membrane. The catalysed reaction is a beta-D-glucosyl-(1&lt;-&gt;1')-N-acylsphing-4-enine + UDP-alpha-D-galactose = a beta-D-Gal-(1-&gt;4)-beta-D-Glc-(1&lt;-&gt;1)-Cer(d18:1(4E)) + UDP + H(+). Its pathway is protein modification; protein glycosylation. It participates in sphingolipid metabolism. Its activity is regulated as follows. Inhibited by EDTA. Catalyzes the synthesis of lactosylceramide (LacCer) via the transfer of galactose from UDP-galactose to glucosylceramide (GlcCer). LacCer is the starting point in the biosynthesis of all gangliosides (membrane-bound glycosphingolipids) which play pivotal roles in the CNS including neuronal maturation and axonal and myelin formation. The polypeptide is Beta-1,4-galactosyltransferase 6 (Rattus norvegicus (Rat)).